The primary structure comprises 164 residues: Methanogen homoaconitase small subunit 2 (164 aa).

Residues 26-29 (YLRT) carry the YLRT motif.

It belongs to the LeuD family. LeuD type 2 subfamily. Heterotetramer of 2 HacA and 2 HacB proteins. Cannot form a complex with LeuC.

The catalysed reaction is (2R)-homocitrate = (2R,3S)-homoisocitrate. The enzyme catalyses (2R)-homocitrate = cis-homoaconitate + H2O. It carries out the reaction (2R,3S)-homoisocitrate = cis-homoaconitate + H2O. It catalyses the reaction cis-(homo)2aconitate + H2O = (2R,3S)-iso(homo)2citrate. The catalysed reaction is cis-(homo)3aconitate + H2O = (2R,3S)-iso(homo)3citrate. It participates in organic acid metabolism; 2-oxosuberate biosynthesis. Functionally, component of a hydro-lyase with broad substrate specificity for cis-unsaturated tricarboxylic acids. Catalyzes both the reversible dehydration of (R)-homocitrate ((R)-2-hydroxybutane-1,2,4-tricarboxylate) to produce cis-homoaconitate ((Z)-but-1-ene-1,2,4-tricarboxylate), and its hydration to homoisocitrate ((1R,2S)-1-hydroxybutane-1,2,4-tricarboxylate). Is also able to hydrate the analogous longer chain substrates cis-homo(2)-aconitate, cis-homo(3)-aconitate. These reactions are part of the biosynthesis pathway of coenzyme B. The chain is Methanogen homoaconitase small subunit 2 (hacB2) from Methanosarcina acetivorans (strain ATCC 35395 / DSM 2834 / JCM 12185 / C2A).